The primary structure comprises 600 residues: NADH-ubiquinone oxidoreductase chain 5 (600 aa).

The next 16 membrane-spanning stretches (helical) occupy residues 1–21 (MYIL…LFGR), 27–47 (GAGI…LLIF), 81–101 (LTAV…IFST), 110–130 (VPRF…LVTS), 136–156 (LFIG…FWLT), 178–198 (FVLA…ASVF), 200–220 (IVAL…FIGA), 241–261 (TPVS…FLLI), 274–294 (LMVV…IGLV), 301–323 (VIAY…SQYS), 327–347 (FHLM…GSVI), 366–386 (IPFT…FPYL), 404–424 (YLAF…AYSL), 450–470 (WNLT…GYLT), 488–508 (SIKL…VVLY), and 520–540 (SPVG…NYII).

This sequence belongs to the complex I subunit 5 family.

The protein localises to the mitochondrion inner membrane. It carries out the reaction a ubiquinone + NADH + 5 H(+)(in) = a ubiquinol + NAD(+) + 4 H(+)(out). In terms of biological role, core subunit of the mitochondrial membrane respiratory chain NADH dehydrogenase (Complex I) that is believed to belong to the minimal assembly required for catalysis. Complex I functions in the transfer of electrons from NADH to the respiratory chain. The immediate electron acceptor for the enzyme is believed to be ubiquinone. The sequence is that of NADH-ubiquinone oxidoreductase chain 5 (ND5) from Metridium senile (Brown sea anemone).